We begin with the raw amino-acid sequence, 803 residues long: Bromodomain-containing protein 2 (803 aa).

Position 1 is an N-acetylmethionine (methionine 1). Threonine 6 carries the post-translational modification Phosphothreonine. Phosphoserine is present on serine 37. A disordered region spans residues alanine 53–glycine 73. The 107-residue stretch at arginine 74–methionine 180 folds into the Bromo 1 domain. A protein-binding residues include aspartate 112, tyrosine 155, asparagine 156, lysine 157, aspartate 160, and aspartate 161. 3 disordered regions span residues proline 268 to glutamate 348, glutamate 456 to leucine 652, and glutamate 739 to glycine 803. Over residues threonine 285–serine 298 the composition is skewed to low complexity. Phosphoserine occurs at positions 298 and 301. The span at valine 316–proline 332 shows a compositional bias: basic and acidic residues. One can recognise a Bromo 2 domain in the interval glycine 344–methionine 453. The span at serine 481–glutamate 515 shows a compositional bias: acidic residues. The segment covering lysine 545–arginine 567 has biased composition (basic residues). The Nuclear localization signal signature appears at lysine 556–lysine 560. Positions lysine 623–glycine 632 are enriched in low complexity. One can recognise an NET domain in the interval aspartate 634 to proline 716. Serine 635 is subject to Phosphoserine. Residues serine 641 to leucine 652 show a composition bias toward basic and acidic residues. Low complexity predominate over residues serine 777–threonine 797.

It belongs to the BET family. In terms of assembly, homodimer. Interacts with E2F1. Interacts with (acetylated) STAT3; promoting STAT3 recruitment to chromatin. Interacts with CTCF; promoting BRD2 recruitment to chromatin.

The protein localises to the nucleus. It is found in the chromosome. Chromatin reader protein that specifically recognizes and binds histone H4 acetylated at 'Lys-5' and 'Lys-12' (H4K5ac and H4K12ac, respectively), thereby controlling gene expression and remodeling chromatin structures. Recruits transcription factors and coactivators to target gene sites, and activates RNA polymerase II machinery for transcriptional elongation. Plays a key role in genome compartmentalization via its association with CTCF and cohesin: recruited to chromatin by CTCF and promotes formation of topologically associating domains (TADs) via its ability to bind acetylated histones, contributing to CTCF boundary formation and enhancer insulation. Also recognizes and binds acetylated non-histone proteins, such as STAT3. Involved in inflammatory response by regulating differentiation of naive CD4(+) T-cells into T-helper Th17: recognizes and binds STAT3 acetylated at 'Lys-87', promoting STAT3 recruitment to chromatin. In addition to acetylated lysines, also recognizes and binds lysine residues on histones that are both methylated and acetylated on the same side chain to form N6-acetyl-N6-methyllysine (Kacme), an epigenetic mark of active chromatin associated with increased transcriptional initiation. Specifically binds histone H4 acetyl-methylated at 'Lys-5' and 'Lys-12' (H4K5acme and H4K12acme, respectively). The protein is Bromodomain-containing protein 2 (BRD2) of Bos taurus (Bovine).